Consider the following 288-residue polypeptide: uncharacterized protein (288 aa).

Over residues 1 to 12 (MTEGRCAQHPDG) the composition is skewed to basic and acidic residues. The segment at 1–20 (MTEGRCAQHPDGLDVQDVCD) is disordered.

This sequence belongs to the class IV-like SAM-binding methyltransferase superfamily. RNA methyltransferase TrmH family.

This is an uncharacterized protein from Mycobacterium bovis (strain ATCC BAA-935 / AF2122/97).